Consider the following 129-residue polypeptide: Ribulose bisphosphate carboxylase small subunit (129 aa).

Basic and acidic residues predominate over residues Glu104–Ser120. A disordered region spans residues Glu104–Arg129.

It belongs to the RuBisCO small chain family. As to quaternary structure, heterohexadecamer of 8 large and 8 small subunits.

In terms of biological role, ruBisCO catalyzes two reactions: the carboxylation of D-ribulose 1,5-bisphosphate, the primary event in carbon dioxide fixation, as well as the oxidative fragmentation of the pentose substrate. Both reactions occur simultaneously and in competition at the same active site. Although the small subunit is not catalytic it is essential for maximal activity. This Sinorhizobium medicae (strain WSM419) (Ensifer medicae) protein is Ribulose bisphosphate carboxylase small subunit.